Reading from the N-terminus, the 156-residue chain is Small ribosomal subunit protein uS7 (156 aa).

Belongs to the universal ribosomal protein uS7 family. As to quaternary structure, part of the 30S ribosomal subunit. Contacts proteins S9 and S11.

In terms of biological role, one of the primary rRNA binding proteins, it binds directly to 16S rRNA where it nucleates assembly of the head domain of the 30S subunit. Is located at the subunit interface close to the decoding center, probably blocks exit of the E-site tRNA. The chain is Small ribosomal subunit protein uS7 from Lactobacillus helveticus (strain DPC 4571).